Consider the following 123-residue polypeptide: Small ribosomal subunit protein uS12 (123 aa).

Aspartate 89 carries the 3-methylthioaspartic acid modification.

It belongs to the universal ribosomal protein uS12 family. In terms of assembly, part of the 30S ribosomal subunit. Contacts proteins S8 and S17. May interact with IF1 in the 30S initiation complex.

Functionally, with S4 and S5 plays an important role in translational accuracy. In terms of biological role, interacts with and stabilizes bases of the 16S rRNA that are involved in tRNA selection in the A site and with the mRNA backbone. Located at the interface of the 30S and 50S subunits, it traverses the body of the 30S subunit contacting proteins on the other side and probably holding the rRNA structure together. The combined cluster of proteins S8, S12 and S17 appears to hold together the shoulder and platform of the 30S subunit. This is Small ribosomal subunit protein uS12 from Afipia carboxidovorans (strain ATCC 49405 / DSM 1227 / KCTC 32145 / OM5) (Oligotropha carboxidovorans).